The chain runs to 484 residues: Glutamyl-tRNA(Gln) amidotransferase subunit A (484 aa).

Active-site charge relay system residues include Lys76 and Ser151. The active-site Acyl-ester intermediate is Ser175.

This sequence belongs to the amidase family. GatA subfamily. In terms of assembly, heterotrimer of A, B and C subunits.

The catalysed reaction is L-glutamyl-tRNA(Gln) + L-glutamine + ATP + H2O = L-glutaminyl-tRNA(Gln) + L-glutamate + ADP + phosphate + H(+). Its function is as follows. Allows the formation of correctly charged Gln-tRNA(Gln) through the transamidation of misacylated Glu-tRNA(Gln) in organisms which lack glutaminyl-tRNA synthetase. The reaction takes place in the presence of glutamine and ATP through an activated gamma-phospho-Glu-tRNA(Gln). The chain is Glutamyl-tRNA(Gln) amidotransferase subunit A from Saccharophagus degradans (strain 2-40 / ATCC 43961 / DSM 17024).